The sequence spans 262 residues: Glucosamine-6-phosphate deaminase (262 aa).

The active-site Proton acceptor; for enolization step is D63. N129 functions as the For ring-opening step in the catalytic mechanism. The active-site Proton acceptor; for ring-opening step is H131. The active-site For ring-opening step is the E136.

This sequence belongs to the glucosamine/galactosamine-6-phosphate isomerase family. NagB subfamily.

The enzyme catalyses alpha-D-glucosamine 6-phosphate + H2O = beta-D-fructose 6-phosphate + NH4(+). It participates in amino-sugar metabolism; N-acetylneuraminate degradation; D-fructose 6-phosphate from N-acetylneuraminate: step 5/5. Functionally, catalyzes the reversible isomerization-deamination of glucosamine 6-phosphate (GlcN6P) to form fructose 6-phosphate (Fru6P) and ammonium ion. The protein is Glucosamine-6-phosphate deaminase of Bacillus cereus (strain G9842).